A 292-amino-acid chain; its full sequence is MAASMAESCRASLYLARSVRMARPRLAAFASDACRVCTGPSRFQSTGPSEPGGFKPPPKPVIVDRRRVPEDERRFLSPEFIPPRGRTNPLKFKIERKDMLDRRKVLPIPEFYVGSILRVTTADPYASGKTSQFLGICIKRSGNGLGATFTLRNTIEGQGVEICFELYNPRIQEIQVVKLEKRLDDNLLYLRDALPEYSTFDVNMKPVPQEACQEVPVNKLKVKMKPKPWSKRWERPNFNIKGIRFDLALTEEQMKEAQKWNKPWIEFDMMREYDTSKIEAALWEEIEASKKS.

The interval 41–60 (SRFQSTGPSEPGGFKPPPKP) is disordered. Phosphoserine is present on Ser-77.

Belongs to the bacterial ribosomal protein bL19 family. As to quaternary structure, component of the mitochondrial ribosome large subunit (39S) which comprises a 16S rRNA and about 50 distinct proteins.

It is found in the mitochondrion. In Mus musculus (Mouse), this protein is Large ribosomal subunit protein bL19m (Mrpl19).